A 303-amino-acid chain; its full sequence is Cathepsin B-like CP1 (303 aa).

Positions 1–19 (MALSLLLAVVCAKPLVSRA) are cleaved as a signal peptide. The N-linked (GlcNAc...) asparagine glycan is linked to N41. 3 disulfide bridges follow: C92–C119, C102–C145, and C138–C181. The active site involves C105. Active-site residues include H249 and N270.

This sequence belongs to the peptidase C1 family.

It is found in the vacuole. In terms of biological role, thiol protease which is required for parasite excystation and invasion of the proximal small intestine of the human host. This Giardia intestinalis (Giardia lamblia) protein is Cathepsin B-like CP1 (CP1).